Here is a 166-residue protein sequence, read N- to C-terminus: Lymphocyte antigen 6G6e (166 aa).

Residues 1 to 18 (MGPSSAFLGVLFLSGTLG) form the signal peptide. The UPAR/Ly6 domain occupies 28–151 (LRCYTCSFAK…PPPNLPLMTL (124 aa)). 4 disulfide bridges follow: C30–C52, C33–C39, C110–C129, and C130–C135.

As to quaternary structure, interacts with CHRNA4. O-glycosylated. Contains sialic acid residues.

It is found in the cell surface. Its subcellular location is the cell membrane. The protein resides in the cell projection. Functionally, believed to act as a modulator of nicotinic acetylcholine receptors (nAChRs) activity. In vitro potentiates alpha-3:beta-4-containing nAChRs maximum response by increasing peak current and slowing down receptor desensitization; the activity is dependent on its cell surface localization. This chain is Lymphocyte antigen 6G6e (Ly6g6e), found in Mus musculus (Mouse).